Reading from the N-terminus, the 347-residue chain is Protein RecA (347 aa).

Gly-70–Thr-77 is an ATP binding site.

It belongs to the RecA family.

Its subcellular location is the cytoplasm. In terms of biological role, can catalyze the hydrolysis of ATP in the presence of single-stranded DNA, the ATP-dependent uptake of single-stranded DNA by duplex DNA, and the ATP-dependent hybridization of homologous single-stranded DNAs. It interacts with LexA causing its activation and leading to its autocatalytic cleavage. The polypeptide is Protein RecA (Ruegeria pomeroyi (strain ATCC 700808 / DSM 15171 / DSS-3) (Silicibacter pomeroyi)).